The primary structure comprises 387 residues: GTP-binding protein 10 (387 aa).

Positions 13–148 (GNFIDNLRLF…RVIHLDLKLI (136 aa)) constitute an Obg domain. The OBG-type G domain maps to 149 to 344 (ADIGLVGFPN…LKNCIRKSLD (196 aa)). Residues 155-162 (GFPNAGKS), 202-206 (DLPGL), and 278-281 (NKMD) contribute to the GTP site.

Belongs to the TRAFAC class OBG-HflX-like GTPase superfamily. OBG GTPase family.

It localises to the nucleus. The protein localises to the nucleolus. Functionally, may be involved in the ribosome maturation process. The sequence is that of GTP-binding protein 10 (GTPBP10) from Bos taurus (Bovine).